A 233-amino-acid polypeptide reads, in one-letter code: 2-C-methyl-D-erythritol 4-phosphate cytidylyltransferase (233 aa).

It belongs to the IspD/TarI cytidylyltransferase family. IspD subfamily.

The enzyme catalyses 2-C-methyl-D-erythritol 4-phosphate + CTP + H(+) = 4-CDP-2-C-methyl-D-erythritol + diphosphate. It functions in the pathway isoprenoid biosynthesis; isopentenyl diphosphate biosynthesis via DXP pathway; isopentenyl diphosphate from 1-deoxy-D-xylulose 5-phosphate: step 2/6. Functionally, catalyzes the formation of 4-diphosphocytidyl-2-C-methyl-D-erythritol from CTP and 2-C-methyl-D-erythritol 4-phosphate (MEP). This chain is 2-C-methyl-D-erythritol 4-phosphate cytidylyltransferase, found in Vibrio atlanticus (strain LGP32) (Vibrio splendidus (strain Mel32)).